A 465-amino-acid chain; its full sequence is 3-isopropylmalate dehydratase large subunit (465 aa).

3 residues coordinate [4Fe-4S] cluster: Cys347, Cys407, and Cys410.

This sequence belongs to the aconitase/IPM isomerase family. LeuC type 1 subfamily. Heterodimer of LeuC and LeuD. [4Fe-4S] cluster is required as a cofactor.

It catalyses the reaction (2R,3S)-3-isopropylmalate = (2S)-2-isopropylmalate. It functions in the pathway amino-acid biosynthesis; L-leucine biosynthesis; L-leucine from 3-methyl-2-oxobutanoate: step 2/4. Its function is as follows. Catalyzes the isomerization between 2-isopropylmalate and 3-isopropylmalate, via the formation of 2-isopropylmaleate. The protein is 3-isopropylmalate dehydratase large subunit of Aeromonas salmonicida (strain A449).